A 707-amino-acid polypeptide reads, in one-letter code: Ferric reduction oxidase 5 (707 aa).

Residues 1–9 lie on the Cytoplasmic side of the membrane; the sequence is MGNMRSLVK. A helical transmembrane segment spans residues 10-29; it reads MLMVVLFLGWIFVWIMISTN. Residues 30–54 are Extracellular-facing; the sequence is RFQNIWTPKLAKYLKTTYFGPQGMN. The helical transmembrane segment at 55–73 threads the bilayer; the sequence is LVLLTVPMMFIAVLSCVYL. The Cytoplasmic portion of the chain corresponds to 74–106; that stretch reads HTQKQPSQTQSLYKCREWKVKGRMGRVMMVMNP. The chain crosses the membrane as a helical span at residues 107-130; it reads LGIVTATELTFSLLFLALLVWALS. The Extracellular segment spans residues 131-198; it reads NYLYLSYHVH…VGLTSESSIK (68 aa). The Ferric oxidoreductase domain maps to 165-284; the sequence is GYVGHYCWAF…HLYGLYIVFY (120 aa). A helical transmembrane segment spans residues 199–222; the sequence is YHIWLGHVSNFCFLVHTVVFLIYW. Heme is bound by residues His-200 and His-214. Topologically, residues 223–272 are cytoplasmic; it reads AMVNKLMETFAWNATYVPNLAGTIAMVIGIAIWVTSLPSFRRKKFEIFFY. A helical membrane pass occupies residues 273-297; that stretch reads THHLYGLYIVFYAIHVGDSWFCMIL. Residues His-274 and His-287 each coordinate heme. Over 298–319 the chain is Extracellular; the sequence is PNIFLFFIDRYLRFLQSTKRSR. The 104-residue stretch at 313-416 folds into the FAD-binding FR-type domain; that stretch reads QSTKRSRLVS…EGPYGPNSFD (104 aa). Residues 320–340 form a helical membrane-spanning segment; sequence LVSAKILPSDNLELTFAKTSG. Topologically, residues 341–533 are cytoplasmic; the sequence is LHYTPTSILF…PISPVLGPNN (193 aa). 362-365 lines the FAD pocket; sequence HPFT. Position 408–411 (408–411) interacts with NAD(+); it reads GPYG. Residues 534–556 form a helical membrane-spanning segment; sequence FLWLGVVILSSFVMFLLLIGIVT. At 557–576 the chain is on the extracellular side; it reads RYYIYPVDHNTGSIYNFTYR. A helical transmembrane segment spans residues 577–598; it reads VLWVMFLGCVCIFISSSIIFLW. The Cytoplasmic segment spans residues 599–707; that stretch reads RKKENKEGDK…LHFEAISFNW (109 aa). The segment at 608-630 is disordered; the sequence is KDSKKQVQSVEFQTPTSSPGSWF. Positions 613 to 627 are enriched in polar residues; the sequence is QVQSVEFQTPTSSPG.

This sequence belongs to the ferric reductase (FRE) family. It depends on FAD as a cofactor. In terms of tissue distribution, expressed at low levels in roots, shoots, pedicels and inflorescence stems, flowers, sepals, stigmas and anther filaments.

It is found in the cell membrane. The catalysed reaction is 2 a Fe(II)-siderophore + NAD(+) + H(+) = 2 a Fe(III)-siderophore + NADH. Its function is as follows. Ferric chelate reductase probably involved in iron reduction in shoots. May participate in the transport of electrons to a Fe(3+) ion via FAD and heme intermediates. May act in iron metabolism in reproductive organs. May function as root surface cupric chelate reductase and participate in the reduction of Cu(2+), for Cu(+) acquisition via Cu(+) transporters in response to copper deficiency. The polypeptide is Ferric reduction oxidase 5 (FRO5) (Arabidopsis thaliana (Mouse-ear cress)).